The sequence spans 548 residues: 5-epi-aristolochene synthase 3 (548 aa).

5 residues coordinate Mg(2+): Asp301, Asp305, Asp444, Thr448, and Glu452. A DDXXD motif motif is present at residues 301–305 (DDTFD).

It belongs to the terpene synthase family. Monomer. Mg(2+) serves as cofactor. In terms of tissue distribution, expressed in roots, but not in shoots.

It is found in the cytoplasm. The enzyme catalyses (2E,6E)-farnesyl diphosphate = (+)-5-epi-aristolochene + diphosphate. It functions in the pathway secondary metabolite biosynthesis; terpenoid biosynthesis. Its function is as follows. Catalyzes the cyclization of trans,trans-farnesyl diphosphate (FPP) to the bicyclic intermediate 5-epi-aristolochene, initial step in the conversion of FPP to the sesquiterpenoid antifungal phytoalexin capsidiol. Produces germacrene A as an enzyme-bound intermediate that is not released by the enzyme, but is further cyclized to produce the bicyclic 5-epi-aristolochene. The protein is 5-epi-aristolochene synthase 3 of Nicotiana attenuata (Coyote tobacco).